A 113-amino-acid chain; its full sequence is MNSTSLFLFSLLLLLVTGAIGKKTKEKFLQSEETVRESFSMGSRGHMSRSSEPEVFVRPQDSIGDEASEEMSSSSSSRRRSKIISSSSDGSNMEGESSYSKRKKSRFSQDALE.

Residues 1–21 form the signal peptide; sequence MNSTSLFLFSLLLLLVTGAIG. The segment at 31–113 is disordered; sequence SEETVRESFS…KSRFSQDALE (83 aa). Low complexity-rich tracts occupy residues 38 to 50 and 83 to 98; these read SFSM…MSRS and IISS…GESS.

The protein belongs to the SVP2/SVP5/SVP6 family. In terms of tissue distribution, testis.

It localises to the secreted. The protein localises to the extracellular space. The polypeptide is Seminal vesicle secretory protein 4 (Svs4) (Mus musculus (Mouse)).